Reading from the N-terminus, the 507-residue chain is MVTLRADEISNIIRERIEQYNIGVKIVNTGTVLQVGDGIARIHGLDEVMAGELVEFEEGTIGIALNLESNNVGVVLMGDGLMIQEGSSVKATGRIAQIPVSEAYLGRVINALAKPIDGRGEISASESRLIESPAPGIISRRSVYEPLQTGLIAIDSMIPIGRGQRELIIGDRQTGKTAVATDTILNQKGQNVICVYVAIGQKASSVAQVVTTFQERGAMEYTIVVAETADSPATLQYLAPYTGAALAEYFMHREQHTSIIYDDLSKQAQAYRQMSLLLRRPPGREAYPGDVFYLHSRLLERAAKSSSRLGEGSMTALPIVETQSGDVSAYIPTNVISITDGQIFLSADLFNAGIRPAINVGISVSRVGSAAQIKAMKQVAGKSKLELAQFAELEAFAQFASDLDKATQNQLARGQRLRELLKQSQSDPLAVEEQIATIYTGANGYLDPLEIGQVKKFLVQLRTYLKKNKSQFKEIISSTKTFTEEAEALLKGAVQEQIELFLLQEQT.

170-177 (GDRQTGKT) serves as a coordination point for ATP.

It belongs to the ATPase alpha/beta chains family. As to quaternary structure, F-type ATPases have 2 components, CF(1) - the catalytic core - and CF(0) - the membrane proton channel. CF(1) has five subunits: alpha(3), beta(3), gamma(1), delta(1), epsilon(1). CF(0) has four main subunits: a, b, b' and c.

It localises to the plastid. The protein localises to the chloroplast thylakoid membrane. It catalyses the reaction ATP + H2O + 4 H(+)(in) = ADP + phosphate + 5 H(+)(out). In terms of biological role, produces ATP from ADP in the presence of a proton gradient across the membrane. The alpha chain is a regulatory subunit. This is ATP synthase subunit alpha, chloroplastic from Dioscorea elephantipes (Elephant's foot yam).